Consider the following 27-residue polypeptide: XFEGRGGFGGRGGGDRGGRGXGGFGGG.

A compositionally biased stretch (gly residues) spans 1-12 (XFEGRGGFGGRG). The tract at residues 1 to 27 (XFEGRGGFGGRGGGDRGGRGXGGFGGG) is disordered. An asymmetric dimethylarginine mark is found at R5, R11, R16, and R19.

It belongs to the methyltransferase superfamily. Fibrillarin family. In terms of assembly, component of box C/D small nucleolar ribonucleoprotein (snoRNP) particles. It is associated with the U3, U8 and U13 small nuclear RNAs.

It localises to the nucleus. Its subcellular location is the nucleolus. It catalyses the reaction L-glutaminyl-[histone H2A] + S-adenosyl-L-methionine = N(5)-methyl-L-glutaminyl-[histone H2A] + S-adenosyl-L-homocysteine + H(+). S-adenosyl-L-methionine-dependent methyltransferase that has the ability to methylate both RNAs and proteins. Involved in pre-rRNA processing. Utilizes the methyl donor S-adenosyl-L-methionine to catalyze the site-specific 2'-hydroxyl methylation of ribose moieties in pre-ribosomal RNA. Site specificity is provided by a guide RNA that base pairs with the substrate. Methylation occurs at a characteristic distance from the sequence involved in base pairing with the guide RNA. Also acts as a protein methyltransferase by mediating methylation of 'Gln-105' of histone H2A (H2AQ105me), a modification that impairs binding of the FACT complex and is specifically present at 35S ribosomal DNA locus. The protein is rRNA/tRNA 2'-O-methyltransferase fibrillarin of Physarum polycephalum (Slime mold).